A 146-amino-acid polypeptide reads, in one-letter code: Protein STIG1 (146 aa).

Residues 1–23 (MAFINLLILIILTLSSTPITTMS) form the signal peptide. Asn-31, Asn-61, and Asn-84 each carry an N-linked (GlcNAc...) asparagine glycan.

It belongs to the STIG1 family. In terms of processing, glycosylated. In terms of tissue distribution, expressed exclusively in the stigmatic secretory zone.

It localises to the secreted. Functionally, involved in the temporal regulation of the exudate secretion onto the stigma. The protein is Protein STIG1 of Nicotiana tabacum (Common tobacco).